The chain runs to 460 residues: MDQSSRYANLNLKEKDLIAGGRHVLCAYIVKPKAGFGDFLQTAAHFAAESSTGTNVEVSTTDDFTRGVDALVYEIDESKELMKIAYPVELFDRNVIDGRAMIASFLTLTIGNNQGMGDVEYAKMYDFYVPPAYLKLFDGPSTTIKDLWRVLGRPVVDGGFIVGTIIKPKLGLRPQPFANACFDFWLGGDFIKNDEPQGNQVFAPFKETVRAVNEAMRRAQDATGQAKLFSFNITADDHYEMLARGEYILETFGENADHIAFLVDGYVAGPAAVTTARRAFPKQYLHYHRAGHGAVTSPQSKRGYTAFVLSKMARLQGASGIHTGTMGFGKMEGEAADRAMAFMITEDSADGPYFHQEWLGMNPTTPIISGGMNALRMPGFFTNLGHSNLIMTAGGGAFGHLDGGAAGAKSLRQAEQCWKLGADPVQFAKEHHEFARAFESFSHDADKLFPGWRGQLGLAA.

Asparagine 112 is a substrate binding site. Residue lysine 167 is the Proton acceptor of the active site. Lysine 169 contributes to the substrate binding site. Lysine 192, aspartate 194, and glutamate 195 together coordinate Mg(2+). Residue lysine 192 is modified to N6-carboxylysine. Residue histidine 288 is the Proton acceptor of the active site. 3 residues coordinate substrate: arginine 289, histidine 322, and serine 369.

It belongs to the RuBisCO large chain family. Type II subfamily. In terms of assembly, homodimer. Mg(2+) serves as cofactor.

The enzyme catalyses 2 (2R)-3-phosphoglycerate + 2 H(+) = D-ribulose 1,5-bisphosphate + CO2 + H2O. It carries out the reaction D-ribulose 1,5-bisphosphate + O2 = 2-phosphoglycolate + (2R)-3-phosphoglycerate + 2 H(+). Its function is as follows. RuBisCO catalyzes two reactions: the carboxylation of D-ribulose 1,5-bisphosphate, the primary event in carbon dioxide fixation, as well as the oxidative fragmentation of the pentose substrate. Both reactions occur simultaneously and in competition at the same active site. The sequence is that of Ribulose bisphosphate carboxylase from Rhodopseudomonas palustris (strain BisA53).